The sequence spans 78 residues: D-alanyl carrier protein (78 aa).

Residues 1 to 78 (MAFRENVLEI…MIITQLEALK (78 aa)) form the Carrier domain. S36 bears the O-(pantetheine 4'-phosphoryl)serine mark.

This sequence belongs to the DltC family. Post-translationally, 4'-phosphopantetheine is transferred from CoA to a specific serine of apo-DCP.

It is found in the cytoplasm. It functions in the pathway cell wall biogenesis; lipoteichoic acid biosynthesis. Functionally, carrier protein involved in the D-alanylation of lipoteichoic acid (LTA). The loading of thioester-linked D-alanine onto DltC is catalyzed by D-alanine--D-alanyl carrier protein ligase DltA. The DltC-carried D-alanyl group is further transferred to cell membrane phosphatidylglycerol (PG) by forming an ester bond, probably catalyzed by DltD. D-alanylation of LTA plays an important role in modulating the properties of the cell wall in Gram-positive bacteria, influencing the net charge of the cell wall. This is D-alanyl carrier protein from Listeria innocua serovar 6a (strain ATCC BAA-680 / CLIP 11262).